A 246-amino-acid polypeptide reads, in one-letter code: MSFIKKIFLSSRSSEDGLFFSKLEKILGFKPLNLTHFRRAFTHRSMNKLDEKGNPMNYERLEFMGDAMLGSVIAAHLFNMSPTGDEGYLTKMRSKIVSREHLNELGKDLNLIQFLESKVTLQNFGENIHGNLFEAFVGAIYLDRGFVYCEKFIHKKVIKPYVDIDKLEGKVISYKSLLIEWCQKEKRVFHYDIYEDEDAGKLKYFGVKLSIDGKVVAKARATSKKKAEEIASKRGYFVFQSEIDGK.

The RNase III domain occupies 20 to 145 (FSKLEKILGF…FVGAIYLDRG (126 aa)). Glutamate 62 is a Mg(2+) binding site. Aspartate 66 is an active-site residue. Asparagine 131 and glutamate 134 together coordinate Mg(2+). The active site involves glutamate 134. The DRBM domain occupies 173–241 (SYKSLLIEWC…SKRGYFVFQS (69 aa)).

The protein belongs to the ribonuclease III family. As to quaternary structure, homodimer. The cofactor is Mg(2+).

Its subcellular location is the cytoplasm. The catalysed reaction is Endonucleolytic cleavage to 5'-phosphomonoester.. In terms of biological role, digests double-stranded RNA. Involved in the processing of primary rRNA transcript to yield the immediate precursors to the large and small rRNAs (23S and 16S). Processes some mRNAs, and tRNAs when they are encoded in the rRNA operon. Processes pre-crRNA and tracrRNA of type II CRISPR loci if present in the organism. The protein is Ribonuclease 3 of Flavobacterium psychrophilum (strain ATCC 49511 / DSM 21280 / CIP 103535 / JIP02/86).